Here is a 600-residue protein sequence, read N- to C-terminus: Single-strand DNA endonuclease 1 (600 aa).

The N-domain stretch occupies residues 1 to 97 (MGVKYLWDVL…KRRLKARFEI (97 aa)). The interval 2 to 97 (GVKYLWDVLE…KRRLKARFEI (96 aa)) is XPG-N domain. Asp30, Asp76, Glu142, Glu144, Asp163, Asp165, and Asp215 together coordinate Mg(2+). The tract at residues 130–215 (STLGILCLDG…IALALLLGSD (86 aa)) is XPG-I domain. I-domain regions lie at residues 130 to 218 (STLG…DYSQ) and 130 to 219 (STLG…YSQG). Residues 215–353 (DYSQGVRGLR…ILPKVAERNL (139 aa)) are 5'-3' exonuclease domain. The disordered stretch occupies residues 433 to 458 (MAAKKKKPKPKQKQKETSSPTKSSSL). Residues 435–444 (AKKKKPKPKQ) are compositionally biased toward basic residues.

The protein belongs to the XPG/RAD2 endonuclease family. GEN subfamily. Mg(2+) serves as cofactor.

Its subcellular location is the nucleus. Functionally, endonuclease which cleaves flap structures at the junction between single-stranded DNA and double-stranded DNA with a specific cleavage site in the 5' overhang strand exactly one nucleotide 3' of the branch point. Structure- and sequence-specific nuclease that resolves holliday junctions (HJs) by symmetrically oriented incisions in two opposing strands near the junction point, thus leading to ligatable products; HJs are physical links between homologous DNA molecules that arise as central intermediary structures during homologous recombination and repair in meiotic and somatic cells. Structure-specific nuclease with 5'-flap endonuclease activity, preferentially cleaving static flaps 5' overhang strand exactly one nucleotide in the 3' direction of the branch point and, to lower extent, on the two neighboring positions. Also able to cleave double-stranded flap strand 1 one nucleotide in the 3' direction of the branch point. Together with MUS81, essential for the resolution of toxic replication structures to ensure genome stability, and to maintain telomere integrity and replication. This Arabidopsis thaliana (Mouse-ear cress) protein is Single-strand DNA endonuclease 1.